The following is a 199-amino-acid chain: Imidazole glycerol phosphate synthase subunit HisH 2 (199 aa).

The Glutamine amidotransferase type-1 domain occupies 1-199; it reads MIAVIDVSGN…NNFLSLESTC (199 aa). Catalysis depends on cysteine 76, which acts as the Nucleophile. Active-site residues include histidine 177 and glutamate 179.

In terms of assembly, heterodimer of HisH and HisF.

It localises to the cytoplasm. It catalyses the reaction 5-[(5-phospho-1-deoxy-D-ribulos-1-ylimino)methylamino]-1-(5-phospho-beta-D-ribosyl)imidazole-4-carboxamide + L-glutamine = D-erythro-1-(imidazol-4-yl)glycerol 3-phosphate + 5-amino-1-(5-phospho-beta-D-ribosyl)imidazole-4-carboxamide + L-glutamate + H(+). The catalysed reaction is L-glutamine + H2O = L-glutamate + NH4(+). It functions in the pathway amino-acid biosynthesis; L-histidine biosynthesis; L-histidine from 5-phospho-alpha-D-ribose 1-diphosphate: step 5/9. Its function is as follows. IGPS catalyzes the conversion of PRFAR and glutamine to IGP, AICAR and glutamate. The HisH subunit provides the glutamine amidotransferase activity that produces the ammonia necessary to HisF for the synthesis of IGP and AICAR. This is Imidazole glycerol phosphate synthase subunit HisH 2 from Legionella pneumophila subsp. pneumophila (strain Philadelphia 1 / ATCC 33152 / DSM 7513).